A 115-amino-acid polypeptide reads, in one-letter code: T cell receptor beta variable 7-8 (115 aa).

The N-terminal stretch at 1-21 is a signal peptide; the sequence is MGTRLLCWVVLGFLGTDHTGA. Residues 22-115 form the Ig-like domain; it reads GVSQSPRYKV…SAVYLCASSL (94 aa). Cysteines 42 and 111 form a disulfide.

In terms of assembly, alpha-beta TR is a heterodimer composed of an alpha and beta chain; disulfide-linked. The alpha-beta TR is associated with the transmembrane signaling CD3 coreceptor proteins to form the TR-CD3 (TcR or TCR). The assembly of alpha-beta TR heterodimers with CD3 occurs in the endoplasmic reticulum where a single alpha-beta TR heterodimer associates with one CD3D-CD3E heterodimer, one CD3G-CD3E heterodimer and one CD247 homodimer forming a stable octameric structure. CD3D-CD3E and CD3G-CD3E heterodimers preferentially associate with TR alpha and TR beta chains, respectively. The association of the CD247 homodimer is the last step of TcR assembly in the endoplasmic reticulum and is required for transport to the cell surface.

It is found in the cell membrane. In terms of biological role, v region of the variable domain of T cell receptor (TR) beta chain that participates in the antigen recognition. Alpha-beta T cell receptors are antigen specific receptors which are essential to the immune response and are present on the cell surface of T lymphocytes. Recognize peptide-major histocompatibility (MH) (pMH) complexes that are displayed by antigen presenting cells (APC), a prerequisite for efficient T cell adaptive immunity against pathogens. Binding of alpha-beta TR to pMH complex initiates TR-CD3 clustering on the cell surface and intracellular activation of LCK that phosphorylates the ITAM motifs of CD3G, CD3D, CD3E and CD247 enabling the recruitment of ZAP70. In turn ZAP70 phosphorylates LAT, which recruits numerous signaling molecules to form the LAT signalosome. The LAT signalosome propagates signal branching to three major signaling pathways, the calcium, the mitogen-activated protein kinase (MAPK) kinase and the nuclear factor NF-kappa-B (NF-kB) pathways, leading to the mobilization of transcription factors that are critical for gene expression and essential for T cell growth and differentiation. The T cell repertoire is generated in the thymus, by V-(D)-J rearrangement. This repertoire is then shaped by intrathymic selection events to generate a peripheral T cell pool of self-MH restricted, non-autoaggressive T cells. Post-thymic interaction of alpha-beta TR with the pMH complexes shapes TR structural and functional avidity. In Homo sapiens (Human), this protein is T cell receptor beta variable 7-8.